The primary structure comprises 375 residues: MKLGVRLCVLVVFSLQLWGPGQGQELEPEQVLAFCDDKDVEAAVDLALVKYNQKLPYGNQLALYQILESSKAQNDSCTQYFVEFNSRVTDCPAGGDKVWRDCDYLPTGNKVPRPCKATVHMSETDKKVLAVFCDPVEAPVVAERTTCLGCPREIDVESEDLKDPLTYSITRFNADSDSSHHFILNSVGFATRQVVAGFRYRLMFDMRKSNCSKADHKELNDECHPDPDVELAHCNSTVDVAPWRHETAEANVECAPGPLDNFDVFRRRPPGWSPLRNFNNFAEVKTTQASTASAKEESSEESQERSPSAVTMANPEPALPSVAPTTAAESPFHCPSKPWKQFVPPTTLRPAQEKSPTPLPVVEEGLSDLDLLGKK.

The signal sequence occupies residues 1-23; it reads MKLGVRLCVLVVFSLQLWGPGQG. Cystatin kininogen-type domains lie at 35–139 and 156–260; these read CDDK…VEAP and VESE…GPLD. Asn74 carries an N-linked (GlcNAc) asparagine glycan. 4 cysteine pairs are disulfide-bonded: Cys91–Cys102, Cys115–Cys133, Cys211–Cys223, and Cys234–Cys254. Asn235 carries N-linked (GlcNAc) asparagine glycosylation. Residues 283–375 are disordered; it reads EVKTTQASTA…LSDLDLLGKK (93 aa).

Post-translationally, N-glycosylated, with sialylated biantennary complex-type glycans. In terms of processing, O-glycosylated, sialylated oligosaccharides. Bradykinin is released from kininogen by kallikrein. Post-translationally, the N-terminus is blocked. As to expression, expressed in the skin, liver, intestine, spleen, pancreas and kidney.

Its subcellular location is the cytoplasm. It is found in the vacuole. Functionally, inhibits papain and ficin (cysteine proteinases) but not trypsin (a serine proteinase). This chain is Kininogen (LOC106584303), found in Salmo salar (Atlantic salmon).